A 148-amino-acid polypeptide reads, in one-letter code: Putative antiporter subunit mnhG2 (148 aa).

Helical transmembrane passes span 11 to 31 (IAAIMIFLGSIIALISSIGLI), 51 to 71 (VLLTLVGVIIFFISSQGYLSV), and 72 to 92 (RLILALVFINLTSPVGGHLIS). The interval 125–148 (EQLKQRAHEREERRRKTYEKEHDY) is disordered. Over residues 127-148 (LKQRAHEREERRRKTYEKEHDY) the composition is skewed to basic and acidic residues.

It belongs to the CPA3 antiporters (TC 2.A.63) subunit G family. As to quaternary structure, may form a heterooligomeric complex that consists of seven subunits: mnhA2, mnhB2, mnhC2, mnhD2, mnhE2, mnhF2 and mnhG2.

It localises to the cell membrane. In Staphylococcus saprophyticus subsp. saprophyticus (strain ATCC 15305 / DSM 20229 / NCIMB 8711 / NCTC 7292 / S-41), this protein is Putative antiporter subunit mnhG2 (mnhG2).